A 150-amino-acid chain; its full sequence is Large ribosomal subunit protein bL9 (150 aa).

The protein belongs to the bacterial ribosomal protein bL9 family.

Its function is as follows. Binds to the 23S rRNA. The protein is Large ribosomal subunit protein bL9 of Pectobacterium atrosepticum (strain SCRI 1043 / ATCC BAA-672) (Erwinia carotovora subsp. atroseptica).